Here is a 565-residue protein sequence, read N- to C-terminus: Zinc finger protein 512 (565 aa).

A disordered region spans residues 1–30 (MSSRLGAVPATSGPTTFKQQRSTRIVGAKN). A compositionally biased stretch (polar residues) spans 12–23 (SGPTTFKQQRST). Glycyl lysine isopeptide (Lys-Gly) (interchain with G-Cter in SUMO2) cross-links involve residues K18 and K83. The segment at 85–147 (AATSHVEGSG…QARRIRKEPP (63 aa)) is disordered. The span at 118–129 (KKHKLYGRKQRP) shows a compositional bias: basic residues. The C2H2-type 1 zinc finger occupies 196-219 (FTCHHCGKQLRSLAGMKYHVMANH). A Glycyl lysine isopeptide (Lys-Gly) (interchain with G-Cter in SUMO2) cross-link involves residue K226. Residues 286-309 (LKCHHCGKPYRSKAGLAYHLRSEH) form a C2H2-type 2 zinc finger. A Glycyl lysine isopeptide (Lys-Gly) (interchain with G-Cter in SUMO2) cross-link involves residue K332. The C2H2-type 3; atypical zinc finger occupies 405 to 429 (IQCPNQGCEAVYSSVSGLKAHLGSC). The C2H2-type 4 zinc-finger motif lies at 439–462 (YKCLLCQKEFVSESGVKYHINSVH). A compositionally biased stretch (basic and acidic residues) spans 484–493 (KQRQQEEEKR). Positions 484-565 (KQRQQEEEKR…PKTNHKRGRK (82 aa)) are disordered. A compositionally biased stretch (basic residues) spans 494–507 (RQQHRSRRSLRRRQ). Positions 522 to 531 (VGKDQRRNEE) are enriched in basic and acidic residues. Positions 554–565 (KPPKTNHKRGRK) are enriched in basic residues.

Belongs to the krueppel C2H2-type zinc-finger protein family.

Its subcellular location is the nucleus. Its function is as follows. May be involved in transcriptional regulation. The sequence is that of Zinc finger protein 512 (ZNF512) from Macaca fascicularis (Crab-eating macaque).